A 205-amino-acid chain; its full sequence is Small ribosomal subunit protein uS4 (205 aa).

Residues Met-1 to Gly-16 show a composition bias toward basic and acidic residues. The tract at residues Met-1–Ser-46 is disordered. The 64-residue stretch at Ser-94–Val-157 folds into the S4 RNA-binding domain.

Belongs to the universal ribosomal protein uS4 family. Part of the 30S ribosomal subunit. Contacts protein S5. The interaction surface between S4 and S5 is involved in control of translational fidelity.

In terms of biological role, one of the primary rRNA binding proteins, it binds directly to 16S rRNA where it nucleates assembly of the body of the 30S subunit. Its function is as follows. With S5 and S12 plays an important role in translational accuracy. This chain is Small ribosomal subunit protein uS4, found in Rhizobium etli (strain CIAT 652).